Reading from the N-terminus, the 393-residue chain is MKYDVVVVGSGVAGPIVARDVAKAGFSVLLVDKKPAIGTPKQCAEGINVNVFKEFDIPYDKRFINREIYGARIYSPSGYTAELRYDKVSGVILERKVFDKMLAYYAAKAGADVWARTEVIDLLRKEGKIMGVKAKHEGELVEIEAKIIVAADGVESTVARLAGINTYAPPHEFDSAYEYEMIIEGYDPDLIHLWFGNEIAPRGYVWVFPKDEDRANVGIGINSDNEKTAKYYLDKWLKENNIPTKKILEINVGLVPVGGFVRELVKENVAVVGDAARQVNPVHGGGMYEAMKAANILAKWIVKALEEENLELLKNYTKEWWEVEGPKMERLLKLRRAMEKLTDEDIDVFVQLLGGTDLEKLAGGNYFEVVKALMKHPKVLMSKRRLEILKALL.

Residues Ala-13, Asp-32, Cys-43, Ala-44, Gly-46, Arg-95, Val-119, Asp-274, and Gly-286 each coordinate FAD. A 2,3-bis-O-(geranylgeranyl)-sn-glycerol 1-phospholipid-binding residues include Lys-327 and Gly-363.

The protein belongs to the geranylgeranyl reductase family. DGGGPL reductase subfamily. FAD serves as cofactor.

The enzyme catalyses a 2,3-bis-O-phytanyl-sn-glycerol 1-phospholipid + 8 A = a 2,3-bis-O-(geranylgeranyl)-sn-glycerol 1-phospholipid + 8 AH2. It catalyses the reaction 2,3-bis-O-(phytanyl)-sn-glycerol 1-phosphate + 8 A = 2,3-bis-O-(geranylgeranyl)-sn-glycerol 1-phosphate + 8 AH2. The catalysed reaction is CDP-2,3-bis-O-(geranylgeranyl)-sn-glycerol + 8 AH2 = CDP-2,3-bis-O-(phytanyl)-sn-glycerol + 8 A. It carries out the reaction archaetidylserine + 8 AH2 = 2,3-bis-O-phytanyl-sn-glycero-3-phospho-L-serine + 8 A. The protein operates within membrane lipid metabolism; glycerophospholipid metabolism. Functionally, is involved in the reduction of 2,3-digeranylgeranylglycerophospholipids (unsaturated archaeols) into 2,3-diphytanylglycerophospholipids (saturated archaeols) in the biosynthesis of archaeal membrane lipids. Catalyzes the formation of archaetidic acid (2,3-di-O-phytanyl-sn-glyceryl phosphate) from 2,3-di-O-geranylgeranylglyceryl phosphate (DGGGP) via the hydrogenation of each double bond of the isoprenoid chains. Is also probably able to reduce double bonds of geranyl groups in CDP-2,3-bis-O-(geranylgeranyl)-sn-glycerol and archaetidylserine, thus acting at various stages in the biosynthesis of archaeal membrane lipids. In Pyrococcus furiosus (strain ATCC 43587 / DSM 3638 / JCM 8422 / Vc1), this protein is Digeranylgeranylglycerophospholipid reductase.